The following is a 780-amino-acid chain: Myosin heavy chain kinase C (780 aa).

The 204-residue stretch at 40-243 (IGDDLKPKWT…VCDFLKLKPI (204 aa)) folds into the Alpha-type protein kinase domain. Positions 310–495 (RIRAQQQQKS…MEQTPDRSEF (186 aa)) are disordered. A compositionally biased stretch (low complexity) spans 337 to 350 (QQSPSSPTSKPVPQ). Over residues 353-376 (KTPSQSNVVNKSPVSPPKENSNVK) the composition is skewed to polar residues. Low complexity predominate over residues 380–436 (DNINNNNSSISSNNDNSNNNNNNNDNINNSSNSSSVNSNSSSVSSSSSSSSSSSSSS). Residues 437–450 (TTNAAPISIQVSRN) show a composition bias toward polar residues. Over residues 458-488 (IQPSSAAASASSTSSSNVPTPESTSTSSMEQ) the composition is skewed to low complexity. WD repeat units lie at residues 507-546 (DTVR…HVTN), 549-589 (AHGK…TIKE), 591-628 (KESN…CVKT), 631-668 (GHTR…ILTN), 671-708 (GHEG…CVNT), and 748-780 (NTRS…WDKM).

Belongs to the protein kinase superfamily. Alpha-type protein kinase family. ALPK subfamily. As to quaternary structure, interacts with myosin II heavy chain (mhcA). Autophosphorylated in vitro.

It localises to the cytoplasm. The protein resides in the cell cortex. The protein localises to the membrane. It is found in the cleavage furrow. It catalyses the reaction L-threonyl-[myosin heavy-chain] + ATP = O-phospho-L-threonyl-[myosin heavy-chain] + ADP + H(+). In terms of biological role, phosphorylates threonine at 'Thr-1823', 'Thr-1833' and 'Thr-2029' in the C-terminal tail region of myosin II heavy chain (mhcA). This phosphorylation is critical in actin-activated ATPase activity of the myosin and regulating the assembly and disassembly of myosin II filament. In vitro, catalytic domain phosphorylates mhcA, myelin basic protein, myosin regulatory light chain, casein and caldesmon. Drives the disassembly of myosin II filaments for efficient cytokinesis and recycling of myosin II that occurs during late cytokinesis. Can be activated in vitro by autophosphorylation. The sequence is that of Myosin heavy chain kinase C (mhkC) from Dictyostelium discoideum (Social amoeba).